The following is a 431-amino-acid chain: Tol-Pal system protein TolB (431 aa).

The N-terminal stretch at 1–26 (MSLMTKLGFRALVASCLITAGSAANA) is a signal peptide. The segment at 406–431 (DGSAPPQILSVQGGSVREPSWGPFMQ) is disordered.

It belongs to the TolB family. In terms of assembly, the Tol-Pal system is composed of five core proteins: the inner membrane proteins TolA, TolQ and TolR, the periplasmic protein TolB and the outer membrane protein Pal. They form a network linking the inner and outer membranes and the peptidoglycan layer.

It localises to the periplasm. Functionally, part of the Tol-Pal system, which plays a role in outer membrane invagination during cell division and is important for maintaining outer membrane integrity. The chain is Tol-Pal system protein TolB from Burkholderia cenocepacia (strain ATCC BAA-245 / DSM 16553 / LMG 16656 / NCTC 13227 / J2315 / CF5610) (Burkholderia cepacia (strain J2315)).